Here is a 250-residue protein sequence, read N- to C-terminus: Small ribosomal subunit protein uS2 (250 aa).

It belongs to the universal ribosomal protein uS2 family.

The polypeptide is Small ribosomal subunit protein uS2 (Polaromonas naphthalenivorans (strain CJ2)).